A 124-amino-acid chain; its full sequence is UPF0102 protein Rcas_2007 (124 aa).

It belongs to the UPF0102 family.

The polypeptide is UPF0102 protein Rcas_2007 (Roseiflexus castenholzii (strain DSM 13941 / HLO8)).